The sequence spans 254 residues: Triosephosphate isomerase (254 aa).

10-12 (NWK) lines the substrate pocket. His99 functions as the Electrophile in the catalytic mechanism. The Proton acceptor role is filled by Glu169. Substrate is bound by residues Gly175, Ser215, and 236 to 237 (GG).

It belongs to the triosephosphate isomerase family. As to quaternary structure, homodimer.

Its subcellular location is the cytoplasm. It catalyses the reaction D-glyceraldehyde 3-phosphate = dihydroxyacetone phosphate. Its pathway is carbohydrate biosynthesis; gluconeogenesis. It participates in carbohydrate degradation; glycolysis; D-glyceraldehyde 3-phosphate from glycerone phosphate: step 1/1. Functionally, involved in the gluconeogenesis. Catalyzes stereospecifically the conversion of dihydroxyacetone phosphate (DHAP) to D-glyceraldehyde-3-phosphate (G3P). The polypeptide is Triosephosphate isomerase (Chlamydia felis (strain Fe/C-56) (Chlamydophila felis)).